A 155-amino-acid polypeptide reads, in one-letter code: Ribosomal RNA large subunit methyltransferase H (155 aa).

Residues Leu72, Gly103, and 122-127 (LGRMVW) contribute to the S-adenosyl-L-methionine site.

Belongs to the RNA methyltransferase RlmH family. As to quaternary structure, homodimer.

It localises to the cytoplasm. It carries out the reaction pseudouridine(1915) in 23S rRNA + S-adenosyl-L-methionine = N(3)-methylpseudouridine(1915) in 23S rRNA + S-adenosyl-L-homocysteine + H(+). In terms of biological role, specifically methylates the pseudouridine at position 1915 (m3Psi1915) in 23S rRNA. The chain is Ribosomal RNA large subunit methyltransferase H from Cereibacter sphaeroides (strain ATCC 17029 / ATH 2.4.9) (Rhodobacter sphaeroides).